We begin with the raw amino-acid sequence, 428 residues long: AP-1 complex subunit mu-1 (428 aa).

In terms of domain architecture, MHD spans 170 to 426; it reads KNEVFLDVIE…ITMAGEYELR (257 aa).

It belongs to the adaptor complexes medium subunit family. In terms of assembly, adaptor protein complex 1 (AP-1) is a heterotetramer composed of two large adaptins (gamma-type subunit and beta-type subunit), a medium adaptin (mu-type subunit) and a small adaptin (sigma-type subunit).

It localises to the golgi apparatus. It is found in the cytoplasmic vesicle. The protein localises to the clathrin-coated vesicle membrane. Its function is as follows. Subunit of clathrin-associated adaptor protein complex 1 that plays a role in protein sorting at the trans-Golgi network and early endosomes (TGN/EE). The AP complexes mediate the recruitment of clathrin to membranes and the recognition of sorting signals within the cytosolic tails of transmembrane cargo molecules. Functions redundantly with AP1M2 in multiple post-Golgi trafficking pathways leading from the TGN to the vacuole, the plasma membrane, and the cell-division plane. In Arabidopsis thaliana (Mouse-ear cress), this protein is AP-1 complex subunit mu-1 (AP1M1).